Reading from the N-terminus, the 108-residue chain is Abscisic stress-ripening protein 3 (108 aa).

Disordered stretches follow at residues 1–34 (MAEEKQHHRLFHHKNREEEGGPVDHKKKVKHHSH) and 84–108 (FAFHEHHQKKEAKKEKKAAEKGRHH). Over residues 15 to 24 (NREEEGGPVD) the composition is skewed to basic and acidic residues. A compositionally biased stretch (basic residues) spans 25–34 (HKKKVKHHSH). Residues 95 to 108 (AKKEKKAAEKGRHH) are compositionally biased toward basic and acidic residues.

This sequence belongs to the abscisic acid and water stress-induced protein family.

The sequence is that of Abscisic stress-ripening protein 3 from Solanum lycopersicum (Tomato).